We begin with the raw amino-acid sequence, 107 residues long: Small ribosomal subunit protein uS17 (107 aa).

Belongs to the universal ribosomal protein uS17 family. As to quaternary structure, part of the 30S ribosomal subunit.

Functionally, one of the primary rRNA binding proteins, it binds specifically to the 5'-end of 16S ribosomal RNA. This is Small ribosomal subunit protein uS17 from Thermotoga petrophila (strain ATCC BAA-488 / DSM 13995 / JCM 10881 / RKU-1).